Here is a 714-residue protein sequence, read N- to C-terminus: DNA ligase (714 aa).

Residues 40-44, 90-91, and E124 contribute to the NAD(+) site; these read DADYD and SL. K126 serves as the catalytic N6-AMP-lysine intermediate. NAD(+)-binding residues include R147, E183, K304, and K328. Zn(2+) is bound by residues C420, C423, C438, and C444. Residues 634-714 enclose the BRCT domain; it reads TRDSEVSGKT…EWAAIVAAAG (81 aa).

The protein belongs to the NAD-dependent DNA ligase family. LigA subfamily. The cofactor is Mg(2+). It depends on Mn(2+) as a cofactor.

The catalysed reaction is NAD(+) + (deoxyribonucleotide)n-3'-hydroxyl + 5'-phospho-(deoxyribonucleotide)m = (deoxyribonucleotide)n+m + AMP + beta-nicotinamide D-nucleotide.. Its function is as follows. DNA ligase that catalyzes the formation of phosphodiester linkages between 5'-phosphoryl and 3'-hydroxyl groups in double-stranded DNA using NAD as a coenzyme and as the energy source for the reaction. It is essential for DNA replication and repair of damaged DNA. In Sphingopyxis alaskensis (strain DSM 13593 / LMG 18877 / RB2256) (Sphingomonas alaskensis), this protein is DNA ligase.